Here is a 289-residue protein sequence, read N- to C-terminus: Diaminopimelate epimerase (289 aa).

Asparagine 13, glutamine 52, and asparagine 72 together coordinate substrate. Cysteine 81 acts as the Proton donor in catalysis. Residues 82 to 83, asparagine 167, asparagine 201, and 219 to 220 contribute to the substrate site; these read GN and ER. Catalysis depends on cysteine 228, which acts as the Proton acceptor. Residue 229-230 coordinates substrate; the sequence is GT.

The protein belongs to the diaminopimelate epimerase family. In terms of assembly, homodimer.

The protein localises to the cytoplasm. The catalysed reaction is (2S,6S)-2,6-diaminopimelate = meso-2,6-diaminopimelate. The protein operates within amino-acid biosynthesis; L-lysine biosynthesis via DAP pathway; DL-2,6-diaminopimelate from LL-2,6-diaminopimelate: step 1/1. Catalyzes the stereoinversion of LL-2,6-diaminopimelate (L,L-DAP) to meso-diaminopimelate (meso-DAP), a precursor of L-lysine and an essential component of the bacterial peptidoglycan. The polypeptide is Diaminopimelate epimerase (Caulobacter sp. (strain K31)).